Reading from the N-terminus, the 250-residue chain is Endonuclease NucS (250 aa).

It belongs to the NucS endonuclease family.

The protein resides in the cytoplasm. Cleaves both 3' and 5' ssDNA extremities of branched DNA structures. The sequence is that of Endonuclease NucS from Sulfolobus acidocaldarius (strain ATCC 33909 / DSM 639 / JCM 8929 / NBRC 15157 / NCIMB 11770).